Consider the following 132-residue polypeptide: MKSYVAVFIGGAIGSLLRYAVNLLGGTAVFPWPTFIENTSGSLLLGLLTGFFAARAKKPLVQLCLGTGFCGGYTTMSAFSKETVLLLQSAAHIGVLYLMASLACGVCFAFLGIVIGKKVSGAAGKEKERYQS.

Helical transmembrane passes span 5–25 (VAVF…NLLG), 34–54 (TFIE…FFAA), 59–79 (PLVQ…MSAF), and 95–115 (VLYL…GIVI). Gly-71 and Thr-74 together coordinate Na(+).

It belongs to the fluoride channel Fluc/FEX (TC 1.A.43) family.

It localises to the cell membrane. It catalyses the reaction fluoride(in) = fluoride(out). Na(+) is not transported, but it plays an essential structural role and its presence is essential for fluoride channel function. Its function is as follows. Fluoride-specific ion channel. Important for reducing fluoride concentration in the cell, thus reducing its toxicity. The sequence is that of Fluoride-specific ion channel FluC 2 from Bacillus licheniformis (strain ATCC 14580 / DSM 13 / JCM 2505 / CCUG 7422 / NBRC 12200 / NCIMB 9375 / NCTC 10341 / NRRL NRS-1264 / Gibson 46).